Consider the following 1462-residue polypeptide: Gag-Pro-Pol polyprotein (1462 aa).

A lipid anchor (N-myristoyl glycine; by host) is attached at glycine 2. A disordered region spans residues 93-143 (QIPSHPAPPPPSSPTHDPPDSDPQIPPPYVEPTAPQVLPVMHPHGVPPTHR). Phosphoserine; by host MAPK1 is present on serine 105. The short motif at 118–121 (PPPY) is the PPXY motif element. The PTAP/PSAP motif motif lies at 124-127 (PTAP). CCHC-type zinc fingers lie at residues 355–372 (QPCF…DCAQ) and 378–395 (GPCP…DCPR). In terms of domain architecture, Peptidase A2 spans 476 to 554 (IEALLDTGAD…NNWAIIGRDA (79 aa)). The active-site For protease activity; shared with dimeric partner is the aspartate 481. Residues 614–804 (LEAGHIEPYT…GTIKFLGQII (191 aa)) enclose the Reverse transcriptase domain. Mg(2+) contacts are provided by aspartate 680, aspartate 755, aspartate 756, aspartate 1040, glutamate 1074, aspartate 1096, aspartate 1157, aspartate 1230, and aspartate 1287. In terms of domain architecture, RNase H type-1 spans 1031–1165 (INTAPCLFSD…TDALLITPIL (135 aa)). Residues 1219-1388 (RGLLPNHIWQ…QPIPETHSLI (170 aa)) form the Integrase catalytic domain. A DNA-binding region (integrase-type) is located at residues 1393–1443 (HWYYFKLPGLNSRQWKGPQEALQEAAGAALIPVSANSAQWIPWRLLKQAAC).

As to quaternary structure, homodimer; the homodimers are part of the immature particles. Interacts with human TSG101 and NEDD4; these interactions are essential for budding and release of viral particles. Homodimer; further assembles as homohexamers. The cofactor is Mg(2+). Post-translationally, phosphorylation of the matrix protein p19 by MAPK1 seems to play a role in budding. In terms of processing, myristoylated. Myristoylation of the matrix (MA) domain mediates the transport and binding of Gag polyproteins to the host plasma membrane and is required for the assembly of viral particles. Specific enzymatic cleavages by the viral protease yield mature proteins. The polyprotein is cleaved during and after budding, this process is termed maturation. The protease is autoproteolytically processed at its N- and C-termini.

It is found in the virion. The catalysed reaction is Endonucleolytic cleavage to 5'-phosphomonoester.. It carries out the reaction DNA(n) + a 2'-deoxyribonucleoside 5'-triphosphate = DNA(n+1) + diphosphate. Its function is as follows. The matrix domain targets Gag, Gag-Pro and Gag-Pro-Pol polyproteins to the plasma membrane via a multipartite membrane binding signal, that includes its myristoylated N-terminus. In terms of biological role, matrix protein. Forms the spherical core of the virus that encapsulates the genomic RNA-nucleocapsid complex. Functionally, binds strongly to viral nucleic acids and promote their aggregation. Also destabilizes the nucleic acids duplexes via highly structured zinc-binding motifs. Its function is as follows. The aspartyl protease mediates proteolytic cleavages of Gag and Gag-Pol polyproteins during or shortly after the release of the virion from the plasma membrane. Cleavages take place as an ordered, step-wise cascade to yield mature proteins. This process is called maturation. Displays maximal activity during the budding process just prior to particle release from the cell (Potential). Cleaves the translation initiation factor eIF4G leading to the inhibition of host cap-dependent translation. In terms of biological role, RT is a multifunctional enzyme that converts the viral RNA genome into dsDNA in the cytoplasm, shortly after virus entry into the cell. This enzyme displays a DNA polymerase activity that can copy either DNA or RNA templates, and a ribonuclease H (RNase H) activity that cleaves the RNA strand of RNA-DNA heteroduplexes in a partially processive 3' to 5'-endonucleasic mode. Conversion of viral genomic RNA into dsDNA requires many steps. A tRNA-Pro binds to the primer-binding site (PBS) situated at the 5'-end of the viral RNA. RT uses the 3' end of the tRNA primer to perform a short round of RNA-dependent minus-strand DNA synthesis. The reading proceeds through the U5 region and ends after the repeated (R) region which is present at both ends of viral RNA. The portion of the RNA-DNA heteroduplex is digested by the RNase H, resulting in a ssDNA product attached to the tRNA primer. This ssDNA/tRNA hybridizes with the identical R region situated at the 3' end of viral RNA. This template exchange, known as minus-strand DNA strong stop transfer, can be either intra- or intermolecular. RT uses the 3' end of this newly synthesized short ssDNA to perform the RNA-dependent minus-strand DNA synthesis of the whole template. RNase H digests the RNA template except for a polypurine tract (PPT) situated at the 5' end of the genome. It is not clear if both polymerase and RNase H activities are simultaneous. RNase H probably can proceed both in a polymerase-dependent (RNA cut into small fragments by the same RT performing DNA synthesis) and a polymerase-independent mode (cleavage of remaining RNA fragments by free RTs). Secondly, RT performs DNA-directed plus-strand DNA synthesis using the PPT that has not been removed by RNase H as primer. PPT and tRNA primers are then removed by RNase H. The 3' and 5' ssDNA PBS regions hybridize to form a circular dsDNA intermediate. Strand displacement synthesis by RT to the PBS and PPT ends produces a blunt ended, linear dsDNA copy of the viral genome that includes long terminal repeats (LTRs) at both ends. Catalyzes viral DNA integration into the host chromosome, by performing a series of DNA cutting and joining reactions. In Homo sapiens (Human), this protein is Gag-Pro-Pol polyprotein (gag-pro-pol).